Here is a 66-residue protein sequence, read N- to C-terminus: Large ribosomal subunit protein bL28 (66 aa).

The segment at 1–26 is disordered; sequence MAKDAITGARTRFGNQRSHALNSSRR. Polar residues predominate over residues 13–25; that stretch reads FGNQRSHALNSSR.

The protein belongs to the bacterial ribosomal protein bL28 family.

The protein is Large ribosomal subunit protein bL28 of Leuconostoc mesenteroides subsp. mesenteroides (strain ATCC 8293 / DSM 20343 / BCRC 11652 / CCM 1803 / JCM 6124 / NCDO 523 / NBRC 100496 / NCIMB 8023 / NCTC 12954 / NRRL B-1118 / 37Y).